Consider the following 449-residue polypeptide: UDP-N-acetylmuramoylalanine--D-glutamate ligase (449 aa).

Position 119–125 (119–125 (GSNGKTT)) interacts with ATP.

It belongs to the MurCDEF family.

The protein resides in the cytoplasm. It catalyses the reaction UDP-N-acetyl-alpha-D-muramoyl-L-alanine + D-glutamate + ATP = UDP-N-acetyl-alpha-D-muramoyl-L-alanyl-D-glutamate + ADP + phosphate + H(+). Its pathway is cell wall biogenesis; peptidoglycan biosynthesis. Cell wall formation. Catalyzes the addition of glutamate to the nucleotide precursor UDP-N-acetylmuramoyl-L-alanine (UMA). This Streptococcus suis (strain 98HAH33) protein is UDP-N-acetylmuramoylalanine--D-glutamate ligase.